The primary structure comprises 613 residues: Dihydroxy-acid dehydratase (613 aa).

Residue aspartate 81 participates in Mg(2+) binding. Cysteine 122 is a [2Fe-2S] cluster binding site. Mg(2+) is bound by residues aspartate 123 and lysine 124. Lysine 124 carries the N6-carboxylysine modification. [2Fe-2S] cluster is bound at residue cysteine 195. Glutamate 491 is a Mg(2+) binding site. Serine 517 functions as the Proton acceptor in the catalytic mechanism.

This sequence belongs to the IlvD/Edd family. In terms of assembly, homodimer. [2Fe-2S] cluster is required as a cofactor. Mg(2+) serves as cofactor.

The enzyme catalyses (2R)-2,3-dihydroxy-3-methylbutanoate = 3-methyl-2-oxobutanoate + H2O. It carries out the reaction (2R,3R)-2,3-dihydroxy-3-methylpentanoate = (S)-3-methyl-2-oxopentanoate + H2O. It participates in amino-acid biosynthesis; L-isoleucine biosynthesis; L-isoleucine from 2-oxobutanoate: step 3/4. Its pathway is amino-acid biosynthesis; L-valine biosynthesis; L-valine from pyruvate: step 3/4. Functionally, functions in the biosynthesis of branched-chain amino acids. Catalyzes the dehydration of (2R,3R)-2,3-dihydroxy-3-methylpentanoate (2,3-dihydroxy-3-methylvalerate) into 2-oxo-3-methylpentanoate (2-oxo-3-methylvalerate) and of (2R)-2,3-dihydroxy-3-methylbutanoate (2,3-dihydroxyisovalerate) into 2-oxo-3-methylbutanoate (2-oxoisovalerate), the penultimate precursor to L-isoleucine and L-valine, respectively. This chain is Dihydroxy-acid dehydratase, found in Aliivibrio fischeri (strain ATCC 700601 / ES114) (Vibrio fischeri).